Consider the following 257-residue polypeptide: Global transcriptional regulator CodY (257 aa).

Residues 1 to 155 (MSLLSKTREL…AATVIGMEIL (155 aa)) form a GAF domain region. Positions 203–222 (ASKVADGVGITRSVIVNALR) form a DNA-binding region, H-T-H motif.

It belongs to the CodY family.

The protein resides in the cytoplasm. In terms of biological role, DNA-binding global transcriptional regulator which is involved in the adaptive response to starvation and acts by directly or indirectly controlling the expression of numerous genes in response to nutrient availability. During rapid exponential growth, CodY is highly active and represses genes whose products allow adaptation to nutrient depletion. The chain is Global transcriptional regulator CodY from Staphylococcus aureus (strain bovine RF122 / ET3-1).